Here is a 233-residue protein sequence, read N- to C-terminus: Pilin-like protein PilA3 (233 aa).

Residues 1-4 constitute a propeptide, leader sequence; that stretch reads MKRG. N-methylphenylalanine is present on F5. A helical transmembrane segment spans residues 5-25; the sequence is FTLVEVLVAMAILVVVLAVGV. The segment at 121-143 is disordered; it reads LRRSDVNATPSSGSDCTTPPPNS. Positions 126–137 are enriched in polar residues; sequence VNATPSSGSDCT.

The protein localises to the cell inner membrane. Its subcellular location is the cell outer membrane. It localises to the periplasm. Functionally, plays an essential role in natural DNA transformation but is not required for pilus biogenesis. This chain is Pilin-like protein PilA3 (pilA3), found in Thermus thermophilus (strain ATCC BAA-163 / DSM 7039 / HB27).